The sequence spans 268 residues: Adenosylcobinamide-GDP ribazoletransferase (268 aa).

Helical transmembrane passes span 54–74 (IAGLVIGGILAAVGWGAGVLW), 80–100 (AVVLVVAWGVLTAGMHLDGLS), 124–144 (IGVMGALALAAVLGLKAAFLA), 150–170 (WLTAVVLAPVLGRWADVYGIV), 202–222 (ALALIVGGVGGLIALALVWMV), and 243–263 (GALCEIAEVVALATLTLSAPM).

Belongs to the CobS family. It depends on Mg(2+) as a cofactor.

The protein localises to the cell membrane. The enzyme catalyses alpha-ribazole + adenosylcob(III)inamide-GDP = adenosylcob(III)alamin + GMP + H(+). It carries out the reaction alpha-ribazole 5'-phosphate + adenosylcob(III)inamide-GDP = adenosylcob(III)alamin 5'-phosphate + GMP + H(+). The protein operates within cofactor biosynthesis; adenosylcobalamin biosynthesis; adenosylcobalamin from cob(II)yrinate a,c-diamide: step 7/7. Its function is as follows. Joins adenosylcobinamide-GDP and alpha-ribazole to generate adenosylcobalamin (Ado-cobalamin). Also synthesizes adenosylcobalamin 5'-phosphate from adenosylcobinamide-GDP and alpha-ribazole 5'-phosphate. The polypeptide is Adenosylcobinamide-GDP ribazoletransferase (Roseiflexus sp. (strain RS-1)).